A 339-amino-acid chain; its full sequence is UDP-N-acetylglucosamine--N-acetylmuramyl-(pentapeptide) pyrophosphoryl-undecaprenol N-acetylglucosamine transferase (339 aa).

UDP-N-acetyl-alpha-D-glucosamine contacts are provided by residues 10–12 (TGG), N124, R168, S188, I235, and Q280.

It belongs to the glycosyltransferase 28 family. MurG subfamily.

Its subcellular location is the cell inner membrane. It catalyses the reaction di-trans,octa-cis-undecaprenyl diphospho-N-acetyl-alpha-D-muramoyl-L-alanyl-D-glutamyl-meso-2,6-diaminopimeloyl-D-alanyl-D-alanine + UDP-N-acetyl-alpha-D-glucosamine = di-trans,octa-cis-undecaprenyl diphospho-[N-acetyl-alpha-D-glucosaminyl-(1-&gt;4)]-N-acetyl-alpha-D-muramoyl-L-alanyl-D-glutamyl-meso-2,6-diaminopimeloyl-D-alanyl-D-alanine + UDP + H(+). It participates in cell wall biogenesis; peptidoglycan biosynthesis. Its function is as follows. Cell wall formation. Catalyzes the transfer of a GlcNAc subunit on undecaprenyl-pyrophosphoryl-MurNAc-pentapeptide (lipid intermediate I) to form undecaprenyl-pyrophosphoryl-MurNAc-(pentapeptide)GlcNAc (lipid intermediate II). The chain is UDP-N-acetylglucosamine--N-acetylmuramyl-(pentapeptide) pyrophosphoryl-undecaprenol N-acetylglucosamine transferase from Pseudothermotoga lettingae (strain ATCC BAA-301 / DSM 14385 / NBRC 107922 / TMO) (Thermotoga lettingae).